The primary structure comprises 682 residues: DNA-directed RNA polymerase subunit beta' (682 aa).

Residues C69, C71, C87, and C90 each coordinate Zn(2+). The Mg(2+) site is built by D489, D491, and D493.

Belongs to the RNA polymerase beta' chain family. RpoC1 subfamily. In plastids the minimal PEP RNA polymerase catalytic core is composed of four subunits: alpha, beta, beta', and beta''. When a (nuclear-encoded) sigma factor is associated with the core the holoenzyme is formed, which can initiate transcription. The cofactor is Mg(2+). Requires Zn(2+) as cofactor.

It is found in the plastid. The protein localises to the chloroplast. It carries out the reaction RNA(n) + a ribonucleoside 5'-triphosphate = RNA(n+1) + diphosphate. Its function is as follows. DNA-dependent RNA polymerase catalyzes the transcription of DNA into RNA using the four ribonucleoside triphosphates as substrates. The sequence is that of DNA-directed RNA polymerase subunit beta' from Oryza nivara (Indian wild rice).